A 149-amino-acid polypeptide reads, in one-letter code: Glutamyl-tRNA(Gln) amidotransferase subunit C, mitochondrial (149 aa).

This sequence belongs to the GatC family. Subunit of the heterotrimeric GatCAB amidotransferase (AdT) complex, composed of A, B and C subunits.

The protein resides in the mitochondrion. The catalysed reaction is L-glutamyl-tRNA(Gln) + L-glutamine + ATP + H2O = L-glutaminyl-tRNA(Gln) + L-glutamate + ADP + phosphate + H(+). In terms of biological role, allows the formation of correctly charged Gln-tRNA(Gln) through the transamidation of misacylated Glu-tRNA(Gln) in the mitochondria. The reaction takes place in the presence of glutamine and ATP through an activated gamma-phospho-Glu-tRNA(Gln). The sequence is that of Glutamyl-tRNA(Gln) amidotransferase subunit C, mitochondrial from Trichoplax adhaerens (Trichoplax reptans).